The primary structure comprises 282 residues: Phosphatidylserine decarboxylase proenzyme (282 aa).

Active-site charge relay system; for autoendoproteolytic cleavage activity residues include aspartate 88, histidine 144, and serine 247. Catalysis depends on serine 247, which acts as the Schiff-base intermediate with substrate; via pyruvic acid; for decarboxylase activity. Serine 247 is subject to Pyruvic acid (Ser); by autocatalysis.

Belongs to the phosphatidylserine decarboxylase family. PSD-B subfamily. Prokaryotic type I sub-subfamily. As to quaternary structure, heterodimer of a large membrane-associated beta subunit and a small pyruvoyl-containing alpha subunit. Pyruvate is required as a cofactor. Is synthesized initially as an inactive proenzyme. Formation of the active enzyme involves a self-maturation process in which the active site pyruvoyl group is generated from an internal serine residue via an autocatalytic post-translational modification. Two non-identical subunits are generated from the proenzyme in this reaction, and the pyruvate is formed at the N-terminus of the alpha chain, which is derived from the carboxyl end of the proenzyme. The autoendoproteolytic cleavage occurs by a canonical serine protease mechanism, in which the side chain hydroxyl group of the serine supplies its oxygen atom to form the C-terminus of the beta chain, while the remainder of the serine residue undergoes an oxidative deamination to produce ammonia and the pyruvoyl prosthetic group on the alpha chain. During this reaction, the Ser that is part of the protease active site of the proenzyme becomes the pyruvoyl prosthetic group, which constitutes an essential element of the active site of the mature decarboxylase.

It is found in the cell membrane. The enzyme catalyses a 1,2-diacyl-sn-glycero-3-phospho-L-serine + H(+) = a 1,2-diacyl-sn-glycero-3-phosphoethanolamine + CO2. It participates in phospholipid metabolism; phosphatidylethanolamine biosynthesis; phosphatidylethanolamine from CDP-diacylglycerol: step 2/2. Its function is as follows. Catalyzes the formation of phosphatidylethanolamine (PtdEtn) from phosphatidylserine (PtdSer). In Xanthomonas campestris pv. campestris (strain B100), this protein is Phosphatidylserine decarboxylase proenzyme.